The sequence spans 424 residues: Gamma-glutamyl phosphate reductase (424 aa).

This sequence belongs to the gamma-glutamyl phosphate reductase family.

Its subcellular location is the cytoplasm. The enzyme catalyses L-glutamate 5-semialdehyde + phosphate + NADP(+) = L-glutamyl 5-phosphate + NADPH + H(+). The protein operates within amino-acid biosynthesis; L-proline biosynthesis; L-glutamate 5-semialdehyde from L-glutamate: step 2/2. Its function is as follows. Catalyzes the NADPH-dependent reduction of L-glutamate 5-phosphate into L-glutamate 5-semialdehyde and phosphate. The product spontaneously undergoes cyclization to form 1-pyrroline-5-carboxylate. The polypeptide is Gamma-glutamyl phosphate reductase (Dehalococcoides mccartyi (strain ATCC BAA-2266 / KCTC 15142 / 195) (Dehalococcoides ethenogenes (strain 195))).